The primary structure comprises 347 residues: Protein RecA (347 aa).

An ATP-binding site is contributed by 66 to 73 (GPESSGKT).

This sequence belongs to the RecA family.

It localises to the cytoplasm. In terms of biological role, can catalyze the hydrolysis of ATP in the presence of single-stranded DNA, the ATP-dependent uptake of single-stranded DNA by duplex DNA, and the ATP-dependent hybridization of homologous single-stranded DNAs. It interacts with LexA causing its activation and leading to its autocatalytic cleavage. The sequence is that of Protein RecA from Methylococcus capsulatus (strain ATCC 33009 / NCIMB 11132 / Bath).